Here is a 256-residue protein sequence, read N- to C-terminus: Exosome complex component RRP41-like (256 aa).

It belongs to the RNase PH family. As to quaternary structure, probable component of the RNA exosome complex. In terms of tissue distribution, highly expressed in imbibed seeds and young seedlings.

The protein localises to the cytoplasm. It localises to the nucleus. Functionally, non-catalytic component of the RNA exosome complex which has 3'-&gt;5' exoribonuclease activity and participates in a multitude of cellular RNA processing, maturation and degradation events. In vitro, is a processive phosphorolytic exonuclease and requires a single-stranded poly(A) tail on the substrate RNA for its activity. Plays an important role in seed germination and early seedling growth by mediating specific cytoplasmic mRNA decay of transcripts coding for the abscisic acid (ABA) biosynthetic enzymes NCED5 and NCED6, and the ABA signaling transcription factors ABI3 and ABI4. The polypeptide is Exosome complex component RRP41-like (Arabidopsis thaliana (Mouse-ear cress)).